The following is a 388-amino-acid chain: Galactokinase (388 aa).

Substrate is bound at residue Glu-33 to Asp-36. ATP-binding positions include Ser-67 and Gly-125–Ser-131. Mg(2+) contacts are provided by Ser-131 and Glu-163. Catalysis depends on Asp-175, which acts as the Proton acceptor. Residue Tyr-225 participates in substrate binding.

Belongs to the GHMP kinase family. GalK subfamily.

Its subcellular location is the cytoplasm. The enzyme catalyses alpha-D-galactose + ATP = alpha-D-galactose 1-phosphate + ADP + H(+). Its pathway is carbohydrate metabolism; galactose metabolism. Catalyzes the transfer of the gamma-phosphate of ATP to D-galactose to form alpha-D-galactose-1-phosphate (Gal-1-P). This chain is Galactokinase, found in Limosilactobacillus fermentum (strain NBRC 3956 / LMG 18251) (Lactobacillus fermentum).